The chain runs to 103 residues: SOSS complex subunit C (103 aa).

It belongs to the SOSS-C family. In terms of assembly, belongs to the multiprotein complex Integrator. Component of the SOSS complex, composed of soss-b (soss-b1/nabp2 or soss-b2/nabp1), soss-a/ints3 and soss-c/inip.

Its subcellular location is the nucleus. In terms of biological role, component of the SOSS complex, a multiprotein complex that functions downstream of the MRN complex to promote DNA repair and G2/M checkpoint. The SOSS complex associates with single-stranded DNA at DNA lesions and influences diverse endpoints in the cellular DNA damage response including cell-cycle checkpoint activation, recombinational repair and maintenance of genomic stability. Required for efficient homologous recombination-dependent repair of double-strand breaks (DSBs). The protein is SOSS complex subunit C (inip) of Danio rerio (Zebrafish).